A 281-amino-acid chain; its full sequence is uncharacterized protein (281 aa).

A signal peptide spans M1–S23. The N-palmitoyl cysteine moiety is linked to residue C24. C24 carries the S-diacylglycerol cysteine lipid modification. Positions H145 to E165 are disordered. Positions H150 to H161 are enriched in basic and acidic residues.

The protein localises to the cell membrane. This is an uncharacterized protein from Mycoplasma genitalium (strain ATCC 33530 / DSM 19775 / NCTC 10195 / G37) (Mycoplasmoides genitalium).